The chain runs to 105 residues: ESAT-6-like protein EsxB (105 aa).

Residues 1 to 23 (MSQGFKTEADVMRNTAHRVDDTN) are disordered. A compositionally biased stretch (basic and acidic residues) spans 7-21 (TEADVMRNTAHRVDD).

It belongs to the WXG100 family. CFP-10 subfamily. As to quaternary structure, forms a tight 1:1 complex with EsxB.

The sequence is that of ESAT-6-like protein EsxB from Corynebacterium diphtheriae (strain ATCC 700971 / NCTC 13129 / Biotype gravis).